A 253-amino-acid chain; its full sequence is 3-deoxy-manno-octulosonate cytidylyltransferase (253 aa).

This sequence belongs to the KdsB family.

It localises to the cytoplasm. The catalysed reaction is 3-deoxy-alpha-D-manno-oct-2-ulosonate + CTP = CMP-3-deoxy-beta-D-manno-octulosonate + diphosphate. It functions in the pathway nucleotide-sugar biosynthesis; CMP-3-deoxy-D-manno-octulosonate biosynthesis; CMP-3-deoxy-D-manno-octulosonate from 3-deoxy-D-manno-octulosonate and CTP: step 1/1. The protein operates within bacterial outer membrane biogenesis; lipopolysaccharide biosynthesis. In terms of biological role, activates KDO (a required 8-carbon sugar) for incorporation into bacterial lipopolysaccharide in Gram-negative bacteria. The polypeptide is 3-deoxy-manno-octulosonate cytidylyltransferase (Proteus mirabilis (strain HI4320)).